The following is a 211-amino-acid chain: Probable nicotinate-nucleotide adenylyltransferase (211 aa).

It belongs to the NadD family.

It carries out the reaction nicotinate beta-D-ribonucleotide + ATP + H(+) = deamido-NAD(+) + diphosphate. It functions in the pathway cofactor biosynthesis; NAD(+) biosynthesis; deamido-NAD(+) from nicotinate D-ribonucleotide: step 1/1. Functionally, catalyzes the reversible adenylation of nicotinate mononucleotide (NaMN) to nicotinic acid adenine dinucleotide (NaAD). The polypeptide is Probable nicotinate-nucleotide adenylyltransferase (Desulfotalea psychrophila (strain LSv54 / DSM 12343)).